A 311-amino-acid polypeptide reads, in one-letter code: Putative F-box protein At1g31090 (311 aa).

The region spanning 4–53 (GANSDSIPTDLIYEILSRLSVKPITRFRCVSKLWESIICRQDFTELFHNR) is the F-box domain. The tract at residues 287–311 (RPAEQNTSTSSREDHLVRTVKRKRA) is disordered.

This chain is Putative F-box protein At1g31090, found in Arabidopsis thaliana (Mouse-ear cress).